A 177-amino-acid chain; its full sequence is Protein GrpE (177 aa).

It belongs to the GrpE family. In terms of assembly, homodimer.

The protein localises to the cytoplasm. Participates actively in the response to hyperosmotic and heat shock by preventing the aggregation of stress-denatured proteins, in association with DnaK and GrpE. It is the nucleotide exchange factor for DnaK and may function as a thermosensor. Unfolded proteins bind initially to DnaJ; upon interaction with the DnaJ-bound protein, DnaK hydrolyzes its bound ATP, resulting in the formation of a stable complex. GrpE releases ADP from DnaK; ATP binding to DnaK triggers the release of the substrate protein, thus completing the reaction cycle. Several rounds of ATP-dependent interactions between DnaJ, DnaK and GrpE are required for fully efficient folding. In Thermus thermophilus (strain ATCC BAA-163 / DSM 7039 / HB27), this protein is Protein GrpE.